The chain runs to 334 residues: Thioredoxin reductase aclT (334 aa).

Residues 16–19 (GGPA), 38–43 (NASIDR), Ile93, Ala122, Asp294, and 302–303 (TL) each bind FAD.

It belongs to the class-II pyridine nucleotide-disulfide oxidoreductase family. As to quaternary structure, homodimer. FAD is required as a cofactor.

It functions in the pathway mycotoxin biosynthesis. In terms of biological role, thioredoxin reductase; part of the gene cluster that mediates the biosynthesis of aspirochlorine (or antibiotic A30641), an unusual halogenated spiro compound with distinctive antifungal properties due to selective inhibition of protein biosynthesis, and which is also active against bacteria, viruses, and murine tumor cells. The non-ribosomal peptide synthetase (NRPS) aclP is responsible the formation of the diketopiperazine (DKP) core from the condensation of 2 phenylalanine residues. One Phe residue is tailored into chlorotyrosine by hydroxylation and chlorination, whereas the second Phe undergoes an unprecedented C-C bond cleavage to be converted into glycine. After formation of the DKP, sulfur is incorporated into the DKP by conjugation with glutathione by aclG, followed by its stepwise degradation to the thiol by aclI, aclJ and aclK, and the dithiol oxidation by aclT. In addition, oxygenases (aclB, aclC, aclL and aclO) and O-methyltransferases (aclM and aclU) act as tailoring enzymes to produce the intermediate dechloroaspirochlorine. Ultimately, chlorination of dechloroaspirochlorine by the halogenase aclH is the last step in the aspirochlorine pathway. The chain is Thioredoxin reductase aclT from Aspergillus oryzae (strain ATCC 42149 / RIB 40) (Yellow koji mold).